The primary structure comprises 337 residues: Ribosomal RNA small subunit methyltransferase H (337 aa).

Residues 36–38 (GGH), aspartate 56, phenylalanine 82, aspartate 100, and glutamine 107 contribute to the S-adenosyl-L-methionine site. The interval 314 to 337 (GLERRSGRIPNPRSPIPASQGDAR) is disordered.

Belongs to the methyltransferase superfamily. RsmH family.

The protein resides in the cytoplasm. It catalyses the reaction cytidine(1402) in 16S rRNA + S-adenosyl-L-methionine = N(4)-methylcytidine(1402) in 16S rRNA + S-adenosyl-L-homocysteine + H(+). Specifically methylates the N4 position of cytidine in position 1402 (C1402) of 16S rRNA. This is Ribosomal RNA small subunit methyltransferase H from Xanthomonas oryzae pv. oryzae (strain PXO99A).